The chain runs to 465 residues: Phenylalanine--tRNA ligase alpha subunit (465 aa).

Residues Thr309, 348–350, and Phe388 contribute to the L-phenylalanine site; that span reads QLD. Position 390 (Glu390) interacts with Mg(2+).

Belongs to the class-II aminoacyl-tRNA synthetase family. Phe-tRNA synthetase alpha subunit type 2 subfamily. As to quaternary structure, tetramer of two alpha and two beta subunits. Mg(2+) serves as cofactor.

It is found in the cytoplasm. The enzyme catalyses tRNA(Phe) + L-phenylalanine + ATP = L-phenylalanyl-tRNA(Phe) + AMP + diphosphate + H(+). In Sulfolobus acidocaldarius (strain ATCC 33909 / DSM 639 / JCM 8929 / NBRC 15157 / NCIMB 11770), this protein is Phenylalanine--tRNA ligase alpha subunit.